We begin with the raw amino-acid sequence, 123 residues long: Large ribosomal subunit protein uL22c (123 aa).

It belongs to the universal ribosomal protein uL22 family. Part of the 50S ribosomal subunit.

It is found in the plastid. Its subcellular location is the chloroplast. Functionally, this protein binds specifically to 23S rRNA. The globular domain of the protein is located near the polypeptide exit tunnel on the outside of the subunit, while an extended beta-hairpin is found that lines the wall of the exit tunnel in the center of the 70S ribosome. The protein is Large ribosomal subunit protein uL22c (rpl22) of Chara vulgaris (Common stonewort).